We begin with the raw amino-acid sequence, 174 residues long: Protein GrpE (174 aa).

It belongs to the GrpE family. As to quaternary structure, homodimer.

It is found in the cytoplasm. Functionally, participates actively in the response to hyperosmotic and heat shock by preventing the aggregation of stress-denatured proteins, in association with DnaK and GrpE. It is the nucleotide exchange factor for DnaK and may function as a thermosensor. Unfolded proteins bind initially to DnaJ; upon interaction with the DnaJ-bound protein, DnaK hydrolyzes its bound ATP, resulting in the formation of a stable complex. GrpE releases ADP from DnaK; ATP binding to DnaK triggers the release of the substrate protein, thus completing the reaction cycle. Several rounds of ATP-dependent interactions between DnaJ, DnaK and GrpE are required for fully efficient folding. In Pseudothermotoga lettingae (strain ATCC BAA-301 / DSM 14385 / NBRC 107922 / TMO) (Thermotoga lettingae), this protein is Protein GrpE.